Reading from the N-terminus, the 954-residue chain is Valine--tRNA ligase (954 aa).

The 'HIGH' region signature appears at 48–58 (PNVTGSLHMGH). The 'KMSKS' region signature appears at 560–564 (KMSKS). Lys563 serves as a coordination point for ATP. Residues 886–954 (INKDTELARL…RAQYLSIENL (69 aa)) are a coiled coil.

The protein belongs to the class-I aminoacyl-tRNA synthetase family. ValS type 1 subfamily. In terms of assembly, monomer.

Its subcellular location is the cytoplasm. It carries out the reaction tRNA(Val) + L-valine + ATP = L-valyl-tRNA(Val) + AMP + diphosphate. Functionally, catalyzes the attachment of valine to tRNA(Val). As ValRS can inadvertently accommodate and process structurally similar amino acids such as threonine, to avoid such errors, it has a 'posttransfer' editing activity that hydrolyzes mischarged Thr-tRNA(Val) in a tRNA-dependent manner. The sequence is that of Valine--tRNA ligase from Mannheimia succiniciproducens (strain KCTC 0769BP / MBEL55E).